A 717-amino-acid chain; its full sequence is Glutamine--fructose-6-phosphate aminotransferase [isomerizing] (717 aa).

Residue cysteine 2 is the For GATase activity of the active site. The region spanning 2 to 318 is the Glutamine amidotransferase type-2 domain; it reads CGIFGYCNYL…DDDLAHIYDG (317 aa). Serine 253 carries the post-translational modification Phosphoserine. Threonine 334 is subject to Phosphothreonine. The residue at position 336 (serine 336) is a Phosphoserine. SIS domains lie at 390–529 and 562–707; these read WLPV…DRVS and CATE…VDFP.

The catalysed reaction is D-fructose 6-phosphate + L-glutamine = D-glucosamine 6-phosphate + L-glutamate. Its pathway is nucleotide-sugar biosynthesis; UDP-N-acetyl-alpha-D-glucosamine biosynthesis; alpha-D-glucosamine 6-phosphate from D-fructose 6-phosphate: step 1/1. Its function is as follows. Involved in amino sugar synthesis (formation of chitin, supplies the amino sugars of asparagine-linked oligosaccharides of glycoproteins). The chain is Glutamine--fructose-6-phosphate aminotransferase [isomerizing] (GFA1) from Saccharomyces cerevisiae (strain ATCC 204508 / S288c) (Baker's yeast).